The sequence spans 214 residues: Cytochrome c biogenesis ATP-binding export protein CcmA (214 aa).

One can recognise an ABC transporter domain in the interval 8-212; sequence LYAADLACLK…PPTVLDLSEV (205 aa). 40-47 is an ATP binding site; sequence GPNGFGKT.

Belongs to the ABC transporter superfamily. CcmA exporter (TC 3.A.1.107) family. As to quaternary structure, the complex is composed of two ATP-binding proteins (CcmA) and two transmembrane proteins (CcmB).

It localises to the cell inner membrane. It carries out the reaction heme b(in) + ATP + H2O = heme b(out) + ADP + phosphate + H(+). Its function is as follows. Part of the ABC transporter complex CcmAB involved in the biogenesis of c-type cytochromes; once thought to export heme, this seems not to be the case, but its exact role is uncertain. Responsible for energy coupling to the transport system. The sequence is that of Cytochrome c biogenesis ATP-binding export protein CcmA from Aromatoleum aromaticum (strain DSM 19018 / LMG 30748 / EbN1) (Azoarcus sp. (strain EbN1)).